We begin with the raw amino-acid sequence, 194 residues long: Outer surface 22 kDa lipoprotein (194 aa).

An N-terminal signal peptide occupies residues 1-21 (MYKNGFFKNYLSLLLIFLVIA). C22 is lipidated: N-palmitoyl cysteine. C22 carries the S-diacylglycerol cysteine lipid modification.

Its subcellular location is the cell outer membrane. In Borreliella burgdorferi (strain N40) (Borrelia burgdorferi), this protein is Outer surface 22 kDa lipoprotein (p22).